Consider the following 211-residue polypeptide: Ras-related protein rab-11.1 (211 aa).

18 to 26 (GDSGVGKSN) lines the GTP pocket. An Effector region motif is present at residues 40-48 (SKSTIGVEF). GTP-binding positions include 66 to 70 (DTAGQ), 124 to 127 (NKSD), and 154 to 156 (SAL). A disordered region spans residues 187–211 (GYGGGSGTIIPSPASDPPKKQCCIP). Residues C208 and C209 are each lipidated (S-geranylgeranyl cysteine).

The protein belongs to the small GTPase superfamily. Rab family. As to quaternary structure, interacts with rei-1 and rei-2. The GDP-form preferentially binds to rei-1 and rei-2. As to expression, expressed weakly in sperm, but more predominantly in oocytes. Expressed in the intestine.

The protein resides in the cytoplasmic vesicle. It localises to the secretory vesicle. Its subcellular location is the endosome. It is found in the cytoplasm. The protein localises to the cytoskeleton. The protein resides in the spindle. It localises to the microtubule organizing center. Its subcellular location is the spindle pole body. It is found in the centrosome. The protein localises to the apical cell membrane. The protein resides in the cytosol. It localises to the recycling endosome membrane. Its subcellular location is the golgi apparatus membrane. It is found in the cytoplasmic granule. Functionally, the small GTPases Rab are key regulators of intracellular membrane trafficking, from the formation of transport vesicles to their fusion with membranes. Rabs cycle between an inactive GDP-bound form and an active GTP-bound form that is able to recruit to membranes different set of downstream effectors directly responsible for vesicle formation, movement, tethering and fusion. Involved in regulating the meiotic maturation of oocytes. Plays a role in egg shell formation, regulating exocytosis of chondroitin proteoglycans following fertilization. Controls cortical granule localization and targets them to the plasma membrane for exocytosis. Acts as a major regulator of membrane delivery during cytokinesis. Regulates the cytoskeleton by facilitating astral microtubule elongation and organization during metaphase to ensure proper spindle alignment and polarity in the first embryonic cell division. Maintains normal endoplasmic reticulum morphology during metaphase. Involved in vesicle formation and plasma membrane repair following exposure to pore forming toxins. Regulates endocytic recycling. May play a role in yolk receptor endocytosis in growing oocytes. Plays a role in the shedding of pathogen spores from intestinal cells via its involvement in spore fusion and endocytic trafficking. This Caenorhabditis elegans protein is Ras-related protein rab-11.1.